A 213-amino-acid chain; its full sequence is Imidazole glycerol phosphate synthase subunit HisH 1 (213 aa).

In terms of domain architecture, Glutamine amidotransferase type-1 spans 3–213 (SVSIVDYGVG…LSIIQQFLQI (211 aa)). C81 functions as the Nucleophile in the catalytic mechanism. Active-site residues include H195 and E197.

As to quaternary structure, heterodimer of HisH and HisF.

The protein localises to the cytoplasm. The enzyme catalyses 5-[(5-phospho-1-deoxy-D-ribulos-1-ylimino)methylamino]-1-(5-phospho-beta-D-ribosyl)imidazole-4-carboxamide + L-glutamine = D-erythro-1-(imidazol-4-yl)glycerol 3-phosphate + 5-amino-1-(5-phospho-beta-D-ribosyl)imidazole-4-carboxamide + L-glutamate + H(+). It carries out the reaction L-glutamine + H2O = L-glutamate + NH4(+). The protein operates within amino-acid biosynthesis; L-histidine biosynthesis; L-histidine from 5-phospho-alpha-D-ribose 1-diphosphate: step 5/9. Its function is as follows. IGPS catalyzes the conversion of PRFAR and glutamine to IGP, AICAR and glutamate. The HisH subunit provides the glutamine amidotransferase activity that produces the ammonia necessary to HisF for the synthesis of IGP and AICAR. This Legionella pneumophila (strain Paris) protein is Imidazole glycerol phosphate synthase subunit HisH 1.